Consider the following 822-residue polypeptide: Anaphase-promoting complex subunit 2 (822 aa).

S218, S314, S470, S534, and S697 each carry phosphoserine. Positions 450–495 (GDLAVELSKTDPASLETGQDSEDDSGEPEDWVPDPVDADPGKSSSK) are disordered. Acidic residues predominate over residues 468–481 (QDSEDDSGEPEDWV). The cullin homology stretch occupies residues 502–700 (ISLLVSIYGS…LLRRRMSVWL (199 aa)). Y810 is modified (phosphotyrosine).

Belongs to the cullin family. The mammalian APC/C is composed at least of 14 distinct subunits ANAPC1, ANAPC2, CDC27/APC3, ANAPC4, ANAPC5, CDC16/APC6, ANAPC7, CDC23/APC8, ANAPC10, ANAPC11, CDC26/APC12, ANAPC13, ANAPC15 and ANAPC16 that assemble into a complex of at least 19 chains with a combined molecular mass of around 1.2 MDa; APC/C interacts with FZR1 and FBXO5. In the context of the APC/C complex, directly interacts with UBE2C and UBE2S. Interacts (via cullin domain) with ANAPC11 and with UBCH10. Interacts with NEUROD2. Interacts with FBXO43; the interaction is direct.

The protein operates within protein modification; protein ubiquitination. Its function is as follows. Together with the RING-H2 protein ANAPC11, constitutes the catalytic component of the anaphase promoting complex/cyclosome (APC/C), a cell cycle-regulated E3 ubiquitin ligase that controls progression through mitosis and the G1 phase of the cell cycle. The APC/C complex acts by mediating ubiquitination and subsequent degradation of target proteins: it mainly mediates the formation of 'Lys-11'-linked polyubiquitin chains and, to a lower extent, the formation of 'Lys-48'- and 'Lys-63'-linked polyubiquitin chains. The APC/C complex catalyzes assembly of branched 'Lys-11'-/'Lys-48'-linked branched ubiquitin chains on target proteins. The CDC20-APC/C complex positively regulates the formation of synaptic vesicle clustering at active zone to the presynaptic membrane in postmitotic neurons. CDC20-APC/C-induced degradation of NEUROD2 drives presynaptic differentiation. This Homo sapiens (Human) protein is Anaphase-promoting complex subunit 2 (ANAPC2).